The following is a 112-amino-acid chain: Divalent-cation tolerance protein CutA (112 aa).

Residues cysteine 16, histidine 83, and histidine 84 each coordinate Cu cation.

Belongs to the CutA family. Homotrimer. The cofactor is Cu cation.

The protein resides in the cytoplasm. Involved in resistance toward heavy metals. This Shigella boydii serotype 18 (strain CDC 3083-94 / BS512) protein is Divalent-cation tolerance protein CutA.